The sequence spans 306 residues: Tryptophan 2,3-dioxygenase (306 aa).

Residues 1-29 (MQPPGDDAAPRCPFAGAHAPDAPHVPEAA) are disordered. Substrate is bound by residues 75 to 79 (FIIQH), Tyr-137, and Arg-141. His-264 provides a ligand contact to heme. Residue Thr-278 participates in substrate binding.

The protein belongs to the tryptophan 2,3-dioxygenase family. Homotetramer. Heme serves as cofactor.

The catalysed reaction is L-tryptophan + O2 = N-formyl-L-kynurenine. It participates in amino-acid degradation; L-tryptophan degradation via kynurenine pathway; L-kynurenine from L-tryptophan: step 1/2. Its function is as follows. Heme-dependent dioxygenase that catalyzes the oxidative cleavage of the L-tryptophan (L-Trp) pyrrole ring and converts L-tryptophan to N-formyl-L-kynurenine. Catalyzes the oxidative cleavage of the indole moiety. The protein is Tryptophan 2,3-dioxygenase of Burkholderia mallei (strain NCTC 10247).